A 176-amino-acid polypeptide reads, in one-letter code: Adenine phosphoribosyltransferase (176 aa).

The protein belongs to the purine/pyrimidine phosphoribosyltransferase family. Homodimer.

The protein localises to the cytoplasm. It catalyses the reaction AMP + diphosphate = 5-phospho-alpha-D-ribose 1-diphosphate + adenine. It functions in the pathway purine metabolism; AMP biosynthesis via salvage pathway; AMP from adenine: step 1/1. Catalyzes a salvage reaction resulting in the formation of AMP, that is energically less costly than de novo synthesis. The sequence is that of Adenine phosphoribosyltransferase from Gluconacetobacter diazotrophicus (strain ATCC 49037 / DSM 5601 / CCUG 37298 / CIP 103539 / LMG 7603 / PAl5).